The primary structure comprises 355 residues: cAMP-dependent protein kinase catalytic subunit PRKX (355 aa).

At methionine 1 the chain carries N-acetylmethionine. Positions 1-42 (MEPPAGAAATVKDPDHDPVKTKVSAPAADPKPRTSSQKAGHS) are disordered. In terms of domain architecture, Protein kinase spans 46-300 (WDTIATVGTG…AEDIKRHRWF (255 aa)). ATP-binding positions include 52–60 (VGTGTFGRV) and lysine 75. Aspartate 169 (proton acceptor) is an active-site residue. Threonine 200 is subject to Phosphothreonine. Residues 301–355 (RGVEWESVPQRKLKPPIVPKLSGDGDISNFETYPESELDKTPSVSDKDLETFKNF) form the AGC-kinase C-terminal domain. The segment at 316 to 355 (PIVPKLSGDGDISNFETYPESELDKTPSVSDKDLETFKNF) is disordered. The segment covering 337 to 355 (ELDKTPSVSDKDLETFKNF) has biased composition (basic and acidic residues).

Belongs to the protein kinase superfamily. AGC Ser/Thr protein kinase family. cAMP subfamily. As to quaternary structure, like other cAMP-dependent protein kinases, the inactive holoenzyme is probably composed of 2 PRKX catalytic subunits and a dimer of regulatory subunits. Interacts (cAMP-dependent) specifically with the regulatory subunits PRKAR1A and PRKAR1B. Compared to other cAMP-dependent serine/threonine protein kinases, does not interact with the 2 other PKA regulatory subunits PRKAR2A and PRKAR2B. Interacts with PIN1 (via WW domain). Interacts with cAMP-dependent protein kinase inhibitor/PKI proteins; inhibits PRKX. Interacts with GPKOW. Interacts with SMAD6. Interacts with PKD1; involved in differentiation and controlled morphogenesis of the kidney. Post-translationally, phosphorylated; autophosphorylates in vitro. Widely expressed.

It is found in the cytoplasm. The protein localises to the nucleus. The enzyme catalyses L-seryl-[protein] + ATP = O-phospho-L-seryl-[protein] + ADP + H(+). It carries out the reaction L-threonyl-[protein] + ATP = O-phospho-L-threonyl-[protein] + ADP + H(+). Binding of cAMP to the PRKAR1A or PRKAR1B regulatory subunits induces dissociation of the holoenzyme heterotetramer. The released monomeric PRKX is then active and able to phosphorylate its substrates. Functionally, serine/threonine protein kinase regulated by and mediating cAMP signaling in cells. Acts through phosphorylation of downstream targets that may include CREB, SMAD6 and PKD1 and has multiple functions in cellular differentiation and epithelial morphogenesis. Regulates myeloid cell differentiation through SMAD6 phosphorylation. Involved in nephrogenesis by stimulating renal epithelial cell migration and tubulogenesis. Also involved in angiogenesis through stimulation of endothelial cell proliferation, migration and vascular-like structure formation. This is cAMP-dependent protein kinase catalytic subunit PRKX (Prkx) from Mus musculus (Mouse).